The chain runs to 184 residues: TRAF-interacting protein with FHA domain-containing protein A (184 aa).

T9 is subject to Phosphothreonine. In terms of domain architecture, FHA spans 47-103 (VKFGRNSNMCQYTFQDKQVSRIQFVLQPFKQFNSSVLSFEIKNMSKKTSLMVDNQEL). Positions 152-184 (NNWPTQNPIPEDGMYSSYFTHRSSPSEMDENEL) are disordered. The span at 168 to 177 (SYFTHRSSPS) shows a compositional bias: polar residues.

The protein belongs to the TIFA family. As to quaternary structure, homooligomer; homooligomerizes following phosphorylation at Thr-9. Interacts with IRAK1, TRAF2 and TRAF6. Interacts with TIFAB; binding to TIFAB inhibits TRAF6 activation, possibly by inducing a conformational change in TIFA. Interacts with ZCCHC11; binding to ZCCHC11 suppresses the TRAF6-dependent activation of NF-kappa-B. In terms of processing, phosphorylated at Thr-9 following detection of ADP-D-glycero-beta-D-manno-heptose (ADP-Heptose) by ALPK1. Phosphorylation at Thr-9 by ALPK1 leads to the formation of an intermolecular binding between the FHA domain and phosphorylated Thr-9, promoting TIFA oligomerization and TIFA-mediated NF-kappa-B activation. Highly expressed in the spleen and at lower levels in heart, brain, lung, liver, kidney and testes.

It localises to the cytoplasm. Functionally, adapter molecule that plays a key role in the activation of pro-inflammatory NF-kappa-B signaling following detection of bacterial pathogen-associated molecular pattern metabolites (PAMPs). Promotes activation of an innate immune response by inducing the oligomerization and polyubiquitination of TRAF6, which leads to the activation of TAK1 and IKK through a proteasome-independent mechanism. TIFA-dependent innate immune response is triggered by ADP-D-glycero-beta-D-manno-heptose (ADP-Heptose), a potent PAMP present in all Gram-negative and some Gram-positive bacteria: ADP-Heptose is recognized by ALPK1, which phosphorylates TIFA at Thr-9, leading to TIFA homooligomerization and subsequent activation of pro-inflammatory NF-kappa-B signaling. The chain is TRAF-interacting protein with FHA domain-containing protein A from Mus musculus (Mouse).